The chain runs to 212 residues: Ras-related protein Rab-15 (212 aa).

Residues Ser17, Gly18, Val19, Gly20, Lys21, Thr22, Cys23, Ser35, Ser39, and Thr40 each contribute to the GTP site. Thr22 contributes to the Mg(2+) binding site. 2 short sequence motifs (switch) span residues 31–45 (NEFHSSHISTIGVDF) and 63–80 (DTAGQERYQTITKQYYRR). 2 residues coordinate Mg(2+): Thr40 and Asp63. Residues Gly66, Asn121, Lys122, Asp124, Ser151, and Ala152 each coordinate GTP. The tract at residues 193–212 (LEEEEGKPEGPANSSKTCWC) is disordered. Residues Cys210 and Cys212 are each lipidated (S-geranylgeranyl cysteine). A Cysteine methyl ester modification is found at Cys212.

This sequence belongs to the small GTPase superfamily. Rab family. In terms of assembly, the GTP bound form of RAB15 interacts with REP15. Interacts (GTP-bound form) with MICAL1, MICAL3, MICALCL, EHBP1 and EHBP1L1. Requires Mg(2+) as cofactor.

The protein resides in the cell membrane. The enzyme catalyses GTP + H2O = GDP + phosphate + H(+). Regulated by guanine nucleotide exchange factors (GEFs) which promote the exchange of bound GDP for free GTP. Regulated by GTPase activating proteins (GAPs) which increase the GTP hydrolysis activity. Inhibited by GDP dissociation inhibitors (GDIs). Its function is as follows. The small GTPases Rab are key regulators of intracellular membrane trafficking, from the formation of transport vesicles to their fusion with membranes. Rabs cycle between an inactive GDP-bound form and an active GTP-bound form that is able to recruit to membranes different sets of downstream effectors directly responsible for vesicle formation, movement, tethering and fusion. RAB15 may act in concert with RAB3A in regulating aspects of synaptic vesicle membrane flow within the nerve terminal. The protein is Ras-related protein Rab-15 of Homo sapiens (Human).